The following is a 303-amino-acid chain: Ribonuclease HIII (303 aa).

The 215-residue stretch at 89–303 folds into the RNase H type-2 domain; sequence WSVLGSDEVG…ANTKKAERLL (215 aa). A divalent metal cation is bound by residues D95, E96, and D199.

The protein belongs to the RNase HII family. RnhC subfamily. Requires Mn(2+) as cofactor. The cofactor is Mg(2+).

The protein resides in the cytoplasm. The enzyme catalyses Endonucleolytic cleavage to 5'-phosphomonoester.. Functionally, endonuclease that specifically degrades the RNA of RNA-DNA hybrids. This is Ribonuclease HIII from Leuconostoc mesenteroides subsp. mesenteroides (strain ATCC 8293 / DSM 20343 / BCRC 11652 / CCM 1803 / JCM 6124 / NCDO 523 / NBRC 100496 / NCIMB 8023 / NCTC 12954 / NRRL B-1118 / 37Y).